The chain runs to 84 residues: Small ribosomal subunit protein eS27-like (84 aa).

A compositionally biased stretch (basic and acidic residues) spans 1-16; the sequence is MPLARDLLHPSLEEEK. A disordered region spans residues 1 to 23; it reads MPLARDLLHPSLEEEKKKHKKKR. The C4-type zinc-finger motif lies at 38–60; that stretch reads PGCYKITTVFSHAQTVVLCVGCS.

It belongs to the eukaryotic ribosomal protein eS27 family. The cofactor is Zn(2+).

The chain is Small ribosomal subunit protein eS27-like from Mus musculus (Mouse).